The chain runs to 65 residues: uncharacterized protein (65 aa).

This is an uncharacterized protein from Vaccinia virus (strain Copenhagen) (VACV).